A 1076-amino-acid chain; its full sequence is Nickel-cobalt-cadmium resistance protein NccA (1076 aa).

12 consecutive transmembrane segments (helical) span residues 14–34, 367–387, 391–411, 419–439, 476–496, 503–523, 562–582, 904–924, 929–949, 960–980, 1004–1024, and 1036–1056; these read WLVLFLTAVVGAIGAWQLNLL, VAKNLVEGAALVVVILFALLG, AAVIAALVIPLSLLISAIGMN, LMSLGALDFGLIIDGAVIIVE, TVYGQLVIFMVFLPCLTFQGV, PMVITLMLALASAFVLSLTFV, MPFLGAALVTLALAAMAFTFV, LAIIVPLCFILIAATLYMAIG, TATVLTAVPLALAGGVFALVL, VGFIAVSGVAVLNGLVLISAI, PVLMTALVASLGFVPMAIATG, and VVIGGLITATVLTLFVLPAVC.

It belongs to the resistance-nodulation-cell division (RND) (TC 2.A.6) family.

It is found in the cell membrane. In terms of biological role, component of the NCC cation-efflux system that confers resistance to nickel, cobalt and cadmium. May form a membrane tunnel, which allows ion transport across the membrane. In Alcaligenes xylosoxydans xylosoxydans (Achromobacter xylosoxidans), this protein is Nickel-cobalt-cadmium resistance protein NccA (nccA).